The following is a 349-amino-acid chain: tRNA N6-adenosine threonylcarbamoyltransferase (349 aa).

Fe cation contacts are provided by His118 and His122. Substrate contacts are provided by residues 141-145 (LVSGG), Asp174, Gly187, and Asn280. A Fe cation-binding site is contributed by Asp308.

The protein belongs to the KAE1 / TsaD family. The cofactor is Fe(2+).

The protein localises to the cytoplasm. The enzyme catalyses L-threonylcarbamoyladenylate + adenosine(37) in tRNA = N(6)-L-threonylcarbamoyladenosine(37) in tRNA + AMP + H(+). Functionally, required for the formation of a threonylcarbamoyl group on adenosine at position 37 (t(6)A37) in tRNAs that read codons beginning with adenine. Is involved in the transfer of the threonylcarbamoyl moiety of threonylcarbamoyl-AMP (TC-AMP) to the N6 group of A37, together with TsaE and TsaB. TsaD likely plays a direct catalytic role in this reaction. The sequence is that of tRNA N6-adenosine threonylcarbamoyltransferase from Acidovorax sp. (strain JS42).